A 616-amino-acid chain; its full sequence is Carboxylic acid transporter protein homolog (616 aa).

Over residues 1–11 the composition is skewed to basic and acidic residues; it reads MSSSITDEKIS. The interval 1–65 is disordered; the sequence is MSSSITDEKI…LYHNPSLPAQ (65 aa). N-acetylserine is present on S2. Residues 2 to 140 are Cytoplasmic-facing; that stretch reads SSSITDEKIS…LRKMTWQNWN (139 aa). The residue at position 4 (S4) is a Phosphoserine. K9 participates in a covalent cross-link: Glycyl lysine isopeptide (Lys-Gly) (interchain with G-Cter in ubiquitin). Residues S11, S61, and S66 each carry the phosphoserine modification. Phosphothreonine is present on T70. The helical transmembrane segment at 141 to 161 threads the bilayer; the sequence is YFFMGYFAWLSAAWAFFCVSV. The Extracellular segment spans residues 162–176; sequence SVAPLAELYDRPTKD. Residues 177 to 197 traverse the membrane as a helical segment; it reads ITWGLGLVLFVRSAGAVIFGL. Topologically, residues 198-205 are cytoplasmic; it reads WTDKSSRK. A helical transmembrane segment spans residues 206 to 226; it reads WPYITCLFLFVIAQLCTPWCD. At 227-230 the chain is on the extracellular side; the sequence is TYEK. The chain crosses the membrane as a helical span at residues 231–251; that stretch reads FLGVRWITGIAMGGIYGCASA. The Cytoplasmic segment spans residues 252–263; it reads TAIEDAPVKARS. A helical membrane pass occupies residues 264–284; that stretch reads FLSGLFFSAYAMGFIFAIIFY. Residues 285 to 296 are Extracellular-facing; it reads RAFGYFRDDGWK. Residues 297–317 traverse the membrane as a helical segment; the sequence is ILFWFSIFLPILLIFWRLLWP. Residues 318 to 363 are Cytoplasmic-facing; sequence ETKYFTKVLKARKLILSDAVKANGGEPLPKANFKQKMVSMKRTVQK. Residue K338 forms a Glycyl lysine isopeptide (Lys-Gly) (interchain with G-Cter in ubiquitin) linkage. The helical transmembrane segment at 364–384 threads the bilayer; that stretch reads YWLLFAYLVVLLVGPNYLTHA. Residues 385-402 lie on the Extracellular side of the membrane; sequence SQDLLPTMLRAQLGLSKD. The helical transmembrane segment at 403–423 threads the bilayer; it reads AVTVIVVVTNIGAICGGMIFG. The Cytoplasmic segment spans residues 424-432; that stretch reads QFMEVTGRR. Residues 433–453 traverse the membrane as a helical segment; that stretch reads LGLLIACTMGGCFTYPAFMLR. Over 454–457 the chain is Extracellular; it reads SEKA. Residues 458 to 478 traverse the membrane as a helical segment; it reads ILGAGFMLYFCVFGVWGILPI. Topologically, residues 479 to 489 are cytoplasmic; the sequence is HLAELAPADAR. Residues 490-510 form a helical membrane-spanning segment; that stretch reads ALVAGLSYQLGNLASAAASTI. Residues 511–535 lie on the Extracellular side of the membrane; sequence ETQLADRYPLERDASGAVIKEDYAK. Residues 536 to 556 traverse the membrane as a helical segment; sequence VMAILTGSVFIFTFACVFVGH. At 557 to 616 the chain is on the cytoplasmic side; sequence EKFHRDLSSPVMKKYINQVEEYEADGLSISDIVEQKTECASVKMIDSNVSKTYEEHIETV. Residues S584, S603, and S606 each carry the phosphoserine modification.

The protein belongs to the major facilitator superfamily. Sugar transporter (TC 2.A.1.1) family.

It is found in the membrane. Essential to lactate transport. This Saccharomyces cerevisiae (strain ATCC 204508 / S288c) (Baker's yeast) protein is Carboxylic acid transporter protein homolog (JEN1).